We begin with the raw amino-acid sequence, 121 residues long: T cell receptor alpha variable 23/delta variable 6 (121 aa).

Residues 1–21 (MDKILGASFLVLWLQLCWVSG) form the signal peptide. The Ig-like domain occupies 30 to 121 (QQVKQSPQSL…DSATYFCAAS (92 aa)). The cysteines at positions 51 and 118 are disulfide-linked. Residue Asn95 is glycosylated (N-linked (GlcNAc...) asparagine).

As to quaternary structure, alpha-beta TR is a heterodimer composed of an alpha and beta chain; disulfide-linked. The alpha-beta TR is associated with the transmembrane signaling CD3 coreceptor proteins to form the TR-CD3 (TcR or TCR). The assembly of alpha-beta TR heterodimers with CD3 occurs in the endoplasmic reticulum where a single alpha-beta TR heterodimer associates with one CD3D-CD3E heterodimer, one CD3G-CD3E heterodimer and one CD247 homodimer forming a stable octameric structure. CD3D-CD3E and CD3G-CD3E heterodimers preferentially associate with TR alpha and TR beta chains, respectively. The association of the CD247 homodimer is the last step of TcR assembly in the endoplasmic reticulum and is required for transport to the cell surface.

The protein resides in the cell membrane. In terms of biological role, v region of the variable domain of T cell receptor (TR) alpha chain that participates in the antigen recognition. Alpha-beta T cell receptors are antigen specific receptors which are essential to the immune response and are present on the cell surface of T lymphocytes. Recognize peptide-major histocompatibility (MH) (pMH) complexes that are displayed by antigen presenting cells (APC), a prerequisite for efficient T cell adaptive immunity against pathogens. Binding of alpha-beta TR to pMH complex initiates TR-CD3 clustering on the cell surface and intracellular activation of LCK that phosphorylates the ITAM motifs of CD3G, CD3D, CD3E and CD247 enabling the recruitment of ZAP70. In turn ZAP70 phosphorylates LAT, which recruits numerous signaling molecules to form the LAT signalosome. The LAT signalosome propagates signal branching to three major signaling pathways, the calcium, the mitogen-activated protein kinase (MAPK) kinase and the nuclear factor NF-kappa-B (NF-kB) pathways, leading to the mobilization of transcription factors that are critical for gene expression and essential for T cell growth and differentiation. The T cell repertoire is generated in the thymus, by V-(D)-J rearrangement. This repertoire is then shaped by intrathymic selection events to generate a peripheral T cell pool of self-MH restricted, non-autoaggressive T cells. Post-thymic interaction of alpha-beta TR with the pMH complexes shapes TR structural and functional avidity. This Homo sapiens (Human) protein is T cell receptor alpha variable 23/delta variable 6.